The primary structure comprises 383 residues: Paralemmin-1 (383 aa).

N-acetylmethionine is present on Met-1. Residues 5-102 are a coiled coil; sequence ATDTASQQER…KEIDVLEFGE (98 aa). 3 disordered regions span residues 51–163, 242–295, and 334–375; these read RERW…GSTM, TLSE…GQEP, and ATPR…MKKP. A compositionally biased stretch (basic and acidic residues) spans 69 to 96; that stretch reads DMRKQMQEDEQKARGLEESITRLEKEID. Polar residues-rich tracts occupy residues 109-124 and 133-143; these read KENS…QSAS and ETLVNAQQTPL. Ser-116, Ser-122, and Ser-124 each carry phosphoserine. A phosphothreonine mark is found at Thr-141, Thr-145, and Thr-153. Ser-157 and Ser-161 each carry phosphoserine. A Phosphothreonine modification is found at Thr-242. Ser-244 carries the post-translational modification Phosphoserine. Residues 257-273 are compositionally biased toward basic and acidic residues; the sequence is GLAEDVTRTTPSRREIT. The segment covering 285-295 has biased composition (low complexity); it reads GPPGIQPGQEP. Phosphoserine is present on Ser-345. Over residues 357–367 the composition is skewed to polar residues; sequence QTGPTTTPSDT. Residues Thr-361, Thr-362, and Thr-363 each carry the phosphothreonine modification. Ser-365 bears the Phosphoserine mark. Thr-367 is modified (phosphothreonine). Residues Cys-377 and Cys-379 are each lipidated (S-palmitoyl cysteine). Cys-380 bears the Cysteine methyl ester mark. Cys-380 carries the S-farnesyl cysteine lipid modification. A propeptide spans 381-383 (removed in mature form); that stretch reads SVM.

Belongs to the paralemmin family. Interacts with dopamine receptor DRD3. As to expression, expression is highest in brain, intermediate in adrenal gland and kidney, and much lower or undetectable in other tissues. Isoform 1 is the predominant isoform in most tissues except brain and kidney where isoform 2 predominates.

The protein localises to the cell membrane. It is found in the cell projection. The protein resides in the filopodium membrane. It localises to the axon. Its subcellular location is the dendrite. The protein localises to the dendritic spine. It is found in the basolateral cell membrane. The protein resides in the apicolateral cell membrane. Involved in plasma membrane dynamics and cell process formation. Isoform 1 and isoform 2 are necessary for axonal and dendritic filopodia induction, for dendritic spine maturation and synapse formation in a palmitoylation-dependent manner. The chain is Paralemmin-1 (Palm) from Mus musculus (Mouse).